The primary structure comprises 434 residues: Putative ZDHHC-type palmitoyltransferase 1 (434 aa).

2 consecutive transmembrane segments (helical) span residues Ala25–Val45 and Ile53–Ile73. The DHHC domain occupies Lys115 to Tyr165. Cys145 serves as the catalytic S-palmitoyl cysteine intermediate. A helical transmembrane segment spans residues Phe160 to Ala180. N-linked (GlcNAc...) asparagine glycans are attached at residues Asn207, Asn216, Asn274, Asn346, Asn362, Asn373, Asn381, Asn387, and Asn393. The disordered stretch occupies residues Thr262 to Gln330. A compositionally biased stretch (low complexity) spans Asn267–Gly316. Positions Thr365–Val434 are disordered. Residues Asn373 to Asn387 show a composition bias toward low complexity. Basic and acidic residues predominate over residues Asp409–Ile419. A glycan (N-linked (GlcNAc...) asparagine) is linked at Asn420. Over residues Asn420–Val434 the composition is skewed to polar residues.

Belongs to the DHHC palmitoyltransferase family.

It is found in the membrane. The enzyme catalyses L-cysteinyl-[protein] + hexadecanoyl-CoA = S-hexadecanoyl-L-cysteinyl-[protein] + CoA. The polypeptide is Putative ZDHHC-type palmitoyltransferase 1 (Dictyostelium discoideum (Social amoeba)).